We begin with the raw amino-acid sequence, 340 residues long: MKALVFEAPERAVLTHRDIPAPAPGEALVRVAYNSVCGSDLSFYKGVWHGFTYPVVPGHEWSGSVVDVNGPRGADLVGRNVVGDLTCSCGTCAHCAAGTPTLCEDLGELGFTRDGACAEYMTVPVANLRPLPDTLPLRTACQVEPLAVALNAVDRLGVTPGEKVAVMGAGGIGLLLVQAVRLRGGTVTAVAEPVPERRAAALALGVPAAVGGDPGALVELTRSDPAAVPDVVLEASGYPTAVQEAVEAVRPGGRVGLVGYRIEEAAVMAPHHIVLKVLTVRASMGPGTRFEEAVDVLASGAVDVDALLSHEFALDDYAKALDVALRRADGNTRSYFNLRA.

Cysteine 37, histidine 59, cysteine 89, cysteine 92, cysteine 95, cysteine 103, and glutamate 144 together coordinate Zn(2+).

It belongs to the zinc-containing alcohol dehydrogenase family. DOIA dehydrogenase subfamily. Zn(2+) serves as cofactor.

It carries out the reaction 2-deoxy-scyllo-inosamine + NADP(+) = 3-amino-2,3-dideoxy-scyllo-inosose + NADPH + H(+). The catalysed reaction is 2-deoxy-scyllo-inosamine + NAD(+) = 3-amino-2,3-dideoxy-scyllo-inosose + NADH + H(+). The protein operates within metabolic intermediate biosynthesis; 2-deoxystreptamine biosynthesis; 2-deoxystreptamine from D-glucose 6-phosphate: step 3/4. Its pathway is antibiotic biosynthesis; neomycin biosynthesis. Catalyzes the oxidation of 2-deoxy-scyllo-inosamine (DOIA) with NAD(+) or NADP(+), forming 3-amino-2,3-dideoxy-scyllo-inosose (amino-DOI). In Streptomyces fradiae (Streptomyces roseoflavus), this protein is 2-deoxy-scyllo-inosamine dehydrogenase (neoA).